Consider the following 193-residue polypeptide: MNQSFSPEVPQSFFQRDALDVARALIGAEFRVGKAGGIIVETEAYHPDDPASHAFNGQTPRNRAMFGPAGHLYVYRSYGIHWCANFVCAPGSAVLLRAIEPLTGIDMMKLRRGTDKLKLLCSGPGKLCQAMAITGEMDGAPLNAPPFLLRLPKEAAAISTGRRIGISRAVDYPWRFGLEGSAFVSKKFEPDQR.

The protein belongs to the DNA glycosylase MPG family.

The chain is Putative 3-methyladenine DNA glycosylase from Agrobacterium fabrum (strain C58 / ATCC 33970) (Agrobacterium tumefaciens (strain C58)).